The primary structure comprises 243 residues: Carboxy-S-adenosyl-L-methionine synthase (243 aa).

Residues Tyr-40, 65–67, 90–91, 118–119, Asn-133, and Arg-200 contribute to the S-adenosyl-L-methionine site; these read GCS, DN, and DI.

Belongs to the class I-like SAM-binding methyltransferase superfamily. Cx-SAM synthase family. As to quaternary structure, homodimer.

It carries out the reaction prephenate + S-adenosyl-L-methionine = carboxy-S-adenosyl-L-methionine + 3-phenylpyruvate + H2O. Its function is as follows. Catalyzes the conversion of S-adenosyl-L-methionine (SAM) to carboxy-S-adenosyl-L-methionine (Cx-SAM). In Shewanella sediminis (strain HAW-EB3), this protein is Carboxy-S-adenosyl-L-methionine synthase.